The primary structure comprises 90 residues: Co-chaperonin GroES (90 aa).

This sequence belongs to the GroES chaperonin family. As to quaternary structure, heptamer of 7 subunits arranged in a ring. Interacts with the chaperonin GroEL.

The protein resides in the cytoplasm. In terms of biological role, together with the chaperonin GroEL, plays an essential role in assisting protein folding. The GroEL-GroES system forms a nano-cage that allows encapsulation of the non-native substrate proteins and provides a physical environment optimized to promote and accelerate protein folding. GroES binds to the apical surface of the GroEL ring, thereby capping the opening of the GroEL channel. In Helicobacter hepaticus (strain ATCC 51449 / 3B1), this protein is Co-chaperonin GroES.